The chain runs to 387 residues: Flap endonuclease 1 (387 aa).

The tract at residues 1 to 104 (MGILGLSKLI…GELAKRAERR (104 aa)) is N-domain. Aspartate 34 serves as a coordination point for Mg(2+). DNA is bound by residues arginine 47 and arginine 70. 5 residues coordinate Mg(2+): aspartate 86, glutamate 158, glutamate 160, aspartate 179, and aspartate 181. The I-domain stretch occupies residues 122–253 (GIEKFNRRLV…KRAIELINNY (132 aa)). DNA is bound at residue glutamate 158. DNA contacts are provided by glycine 231 and aspartate 233. Aspartate 233 contacts Mg(2+). The segment at 336–344 (TQVRLDSFF) is interaction with PCNA. The interval 346-387 (TLPSTPNATNAAKRKAEEAKKSANNKKAKTSGGVGGRGRRPK) is disordered.

It belongs to the XPG/RAD2 endonuclease family. FEN1 subfamily. As to quaternary structure, interacts with PCNA. Three molecules of FEN1 bind to one PCNA trimer with each molecule binding to one PCNA monomer. PCNA stimulates the nuclease activity without altering cleavage specificity. The cofactor is Mg(2+). In terms of processing, phosphorylated. Phosphorylation upon DNA damage induces relocalization to the nuclear plasma.

It is found in the nucleus. The protein localises to the nucleolus. It localises to the nucleoplasm. The protein resides in the mitochondrion. Functionally, structure-specific nuclease with 5'-flap endonuclease and 5'-3' exonuclease activities involved in DNA replication and repair. During DNA replication, cleaves the 5'-overhanging flap structure that is generated by displacement synthesis when DNA polymerase encounters the 5'-end of a downstream Okazaki fragment. It enters the flap from the 5'-end and then tracks to cleave the flap base, leaving a nick for ligation. Also involved in the long patch base excision repair (LP-BER) pathway, by cleaving within the apurinic/apyrimidinic (AP) site-terminated flap. Acts as a genome stabilization factor that prevents flaps from equilibrating into structures that lead to duplications and deletions. Also possesses 5'-3' exonuclease activity on nicked or gapped double-stranded DNA, and exhibits RNase H activity. Also involved in replication and repair of rDNA and in repairing mitochondrial DNA. This chain is Flap endonuclease 1, found in Drosophila erecta (Fruit fly).